The following is a 212-amino-acid chain: Thymidylate kinase (212 aa).

15 to 22 (GIDGAGKS) contributes to the ATP binding site.

It belongs to the thymidylate kinase family.

It carries out the reaction dTMP + ATP = dTDP + ADP. Its function is as follows. Phosphorylation of dTMP to form dTDP in both de novo and salvage pathways of dTTP synthesis. This Chromobacterium violaceum (strain ATCC 12472 / DSM 30191 / JCM 1249 / CCUG 213 / NBRC 12614 / NCIMB 9131 / NCTC 9757 / MK) protein is Thymidylate kinase.